Here is a 197-residue protein sequence, read N- to C-terminus: Phospholipid hydroperoxide glutathione peroxidase (197 aa).

Position 40 is a phosphoserine (S40). The active site involves U73. A non-standard amino acid (selenocysteine) is located at residue U73.

It belongs to the glutathione peroxidase family. Monomer. Has a tendency to form higher mass oligomers. Interacts with FUNDC1; this interaction promotes GPX4 recruitment into mitochondria through TOM/TIM complex where it is degraded by mitophagy.

The protein resides in the mitochondrion. The protein localises to the cytoplasm. It carries out the reaction a hydroperoxy polyunsaturated fatty acid + 2 glutathione = a hydroxy polyunsaturated fatty acid + glutathione disulfide + H2O. It catalyses the reaction 2 glutathione + H2O2 = glutathione disulfide + 2 H2O. The enzyme catalyses tert-butyl hydroperoxide + 2 glutathione = tert-butanol + glutathione disulfide + H2O. The catalysed reaction is cumene hydroperoxide + 2 glutathione = 2-phenylpropan-2-ol + glutathione disulfide + H2O. It carries out the reaction (9S)-hydroperoxy-(10E,12Z)-octadecadienoate + 2 glutathione = (9S)-hydroxy-(10E,12Z)-octadecadienoate + glutathione disulfide + H2O. It catalyses the reaction (13S)-hydroperoxy-(9Z,11E)-octadecadienoate + 2 glutathione = (13S)-hydroxy-(9Z,11E)-octadecadienoate + glutathione disulfide + H2O. The enzyme catalyses (5S)-hydroperoxy-(6E,8Z,11Z,14Z)-eicosatetraenoate + 2 glutathione = (5S)-hydroxy-(6E,8Z,11Z,14Z)-eicosatetraenoate + glutathione disulfide + H2O. The catalysed reaction is (12R)-hydroperoxy-(5Z,8Z,10E,14Z)-eicosatetraenoate + 2 glutathione = (12R)-hydroxy-(5Z,8Z,10E,14Z)-eicosatetraenoate + glutathione disulfide + H2O. It carries out the reaction (12S)-hydroperoxy-(5Z,8Z,10E,14Z)-eicosatetraenoate + 2 glutathione = (12S)-hydroxy-(5Z,8Z,10E,14Z)-eicosatetraenoate + glutathione disulfide + H2O. It catalyses the reaction (15S)-hydroperoxy-(5Z,8Z,11Z,13E)-eicosatetraenoate + 2 glutathione = (15S)-hydroxy-(5Z,8Z,11Z,13E)-eicosatetraenoate + glutathione disulfide + H2O. The enzyme catalyses (5S)-hydroperoxy-(6E,8Z,11Z,14Z,17Z)-eicosapentaenoate + 2 glutathione = (5S)-hydroxy-(6E,8Z,11Z,14Z,17Z)-eicosapentaenoate + glutathione disulfide + H2O. The catalysed reaction is (12S)-hydroperoxy-(5Z,8Z,10E,14Z,17Z)-eicosapentaenoate + 2 glutathione = (12S)-hydroxy-(5Z,8Z,10E,14Z,17Z)-eicosapentaenoate + glutathione disulfide + H2O. It carries out the reaction (15S)-hydroperoxy-(5Z,8Z,11Z,13E,17Z)-eicosapentaenoate + 2 glutathione = (15S)-hydroxy-(5Z,8Z,11Z,13E,17Z)-eicosapentaenoate + glutathione disulfide + H2O. It catalyses the reaction (15S)-hydroperoxy-(11Z,13E)-eicosadienoate + 2 glutathione = (15S)-hydroxy-(11Z,13E)-eicosadienoate + glutathione disulfide + H2O. The enzyme catalyses (17S)-hydroperoxy-(4Z,7Z,10Z,13Z,15E,19Z)-docosahexaenoate + 2 glutathione = (17S)-hydroxy-(4Z,7Z,10Z,13Z,15E,19Z)-docosahexaenoate + glutathione disulfide + H2O. The catalysed reaction is a hydroperoxy-1,2-diacyl-glycero-3-phosphocholine + 2 glutathione = a hydroxy-1,2-diacyl-glycero-3-phosphocholine + glutathione disulfide + H2O. Functionally, essential antioxidant peroxidase that directly reduces phospholipid hydroperoxide even if they are incorporated in membranes and lipoproteins. Can also reduce fatty acid hydroperoxide, cholesterol hydroperoxide and thymine hydroperoxide. Plays a key role in protecting cells from oxidative damage by preventing membrane lipid peroxidation. Required to prevent cells from ferroptosis, a non-apoptotic cell death resulting from an iron-dependent accumulation of lipid reactive oxygen species. The presence of selenocysteine (Sec) versus Cys at the active site is essential for life: it provides resistance to overoxidation and prevents cells against ferroptosis. The presence of Sec at the active site is also essential for the survival of a specific type of parvalbumin-positive interneurons, thereby preventing against fatal epileptic seizures. May be required to protect cells from the toxicity of ingested lipid hydroperoxides. Required for normal sperm development and male fertility. Essential for maturation and survival of photoreceptor cells. Plays a role in a primary T-cell response to viral and parasitic infection by protecting T-cells from ferroptosis and by supporting T-cell expansion. Plays a role of glutathione peroxidase in platelets in the arachidonic acid metabolism. Reduces hydroperoxy ester lipids formed by a 15-lipoxygenase that may play a role as down-regulator of the cellular 15-lipoxygenase pathway. Can also reduce small soluble hydroperoxides such as H2O2, cumene hydroperoxide and tert-butyl hydroperoxide. The protein is Phospholipid hydroperoxide glutathione peroxidase of Hylobates lar (Lar gibbon).